Reading from the N-terminus, the 294-residue chain is Diaminopimelate epimerase (294 aa).

Positions 13, 46, and 69 each coordinate substrate. The active-site Proton donor is the Cys78. Substrate is bound by residues 79 to 80, Asn173, Asn206, and 224 to 225; these read GN and ER. Residue Cys233 is the Proton acceptor of the active site. Substrate is bound at residue 234–235; the sequence is GT.

This sequence belongs to the diaminopimelate epimerase family. In terms of assembly, homodimer.

The protein resides in the cytoplasm. The catalysed reaction is (2S,6S)-2,6-diaminopimelate = meso-2,6-diaminopimelate. The protein operates within amino-acid biosynthesis; L-lysine biosynthesis via DAP pathway; DL-2,6-diaminopimelate from LL-2,6-diaminopimelate: step 1/1. Functionally, catalyzes the stereoinversion of LL-2,6-diaminopimelate (L,L-DAP) to meso-diaminopimelate (meso-DAP), a precursor of L-lysine and an essential component of the bacterial peptidoglycan. This chain is Diaminopimelate epimerase, found in Variovorax paradoxus (strain S110).